The following is a 102-amino-acid chain: UPF0122 protein MPN_424 (102 aa).

Belongs to the UPF0122 family.

Its function is as follows. Might take part in the signal recognition particle (SRP) pathway. This is inferred from the conservation of its genetic proximity to ftsY/ffh. May be a regulatory protein. The polypeptide is UPF0122 protein MPN_424 (Mycoplasma pneumoniae (strain ATCC 29342 / M129 / Subtype 1) (Mycoplasmoides pneumoniae)).